A 416-amino-acid chain; its full sequence is MLEQMGIAAKAASYKLALLSSCEKNRVLEKIADELEAQMESILSANVQDVEQARANGLSEAMLDRLALTPARLKAIADDVRQVCNLADPAGQVIDGGLLDSGLRLERRRVPLGVVGVIYEARPNVTVDVASLCLKTGNAVILRGGKETHRTNAATVLVIQKALKACDLPEAAVQAIDNPDRSLVSEMLRMDKYIDMLIPRGGAGLHKLCREQSTIPVITGGIGVCHIFVDSSADIAPALKIIVNAKTQRPSTCNTVETLLVHQDIAERFLPALSKQMAESGVTLHGDETVMQALHGPAKLVALKPEELDNEFLSLDLNVVVVENMDGAIAHIREHGTQHSDAILTCDMHNAARFVNEVDSAAVYVNASTRFTDGGQFGLGAEVAVSTQKLHARGPMGLEALTTYKWIGFGDGTIRA.

Belongs to the gamma-glutamyl phosphate reductase family.

The protein resides in the cytoplasm. It catalyses the reaction L-glutamate 5-semialdehyde + phosphate + NADP(+) = L-glutamyl 5-phosphate + NADPH + H(+). Its pathway is amino-acid biosynthesis; L-proline biosynthesis; L-glutamate 5-semialdehyde from L-glutamate: step 2/2. Catalyzes the NADPH-dependent reduction of L-glutamate 5-phosphate into L-glutamate 5-semialdehyde and phosphate. The product spontaneously undergoes cyclization to form 1-pyrroline-5-carboxylate. The protein is Gamma-glutamyl phosphate reductase of Salmonella typhi.